The sequence spans 147 residues: D-aminoacyl-tRNA deacylase (147 aa).

Positions 136–137 (GP) match the Gly-cisPro motif, important for rejection of L-amino acids motif.

This sequence belongs to the DTD family. Homodimer.

It localises to the cytoplasm. It catalyses the reaction glycyl-tRNA(Ala) + H2O = tRNA(Ala) + glycine + H(+). The enzyme catalyses a D-aminoacyl-tRNA + H2O = a tRNA + a D-alpha-amino acid + H(+). Functionally, an aminoacyl-tRNA editing enzyme that deacylates mischarged D-aminoacyl-tRNAs. Also deacylates mischarged glycyl-tRNA(Ala), protecting cells against glycine mischarging by AlaRS. Acts via tRNA-based rather than protein-based catalysis; rejects L-amino acids rather than detecting D-amino acids in the active site. By recycling D-aminoacyl-tRNA to D-amino acids and free tRNA molecules, this enzyme counteracts the toxicity associated with the formation of D-aminoacyl-tRNA entities in vivo and helps enforce protein L-homochirality. This chain is D-aminoacyl-tRNA deacylase, found in Streptococcus equi subsp. equi (strain 4047).